A 522-amino-acid polypeptide reads, in one-letter code: MALLPRALSSGGRPSWRRAARASRGFPLPLPFPAAATHALSRAMACRQEPQPQGPPPSAGAVVSYDYLVIGGGSGGLASARRAAELGARAAVVESHKLGGTCVNVGCVPKKVMWNTAVHSEFLHDHGDYGFSSCEGKFNWRVIKEKRDTYVSRLNTIYQNNLTKAHIEIIHGHAVFTSDTKPTIEVSGRKYTAPHILIATGGMPSSPHESQIPGASLGITSDGFFELEELPSRSVIVGAGYIAVEIAGILSALGSKTSLMIRHDKVLRSFDSMISTNCTEELENAGVEVLKFSQVKEVKKTSSGLEVSLVTAVPGRLPVMTTISDVDCLLWAIGRDPNSKGLSLNKLGIKTDDKGHIIVDEFQNTNVKGIYAVGDVCGKALLTPVAIAAGRKLAHRLFENKEDSKLDYNNIPTVVFSHPPIGTVGLTEDEAIHKYGKENVKIYSTSFTPMYHAVTKRKTKCVMKMVCAYEEEKVVGIHMQGLGCDEMLQGFAVAVKMGATKADFDNTVAIHPTSSEELVPLR.

The N-terminal 43 residues, 1–43, are a transit peptide targeting the mitochondrion; it reads MALLPRALSSGGRPSWRRAARASRGFPLPLPFPAAATHALSRA. The FAD site is built by Ser74 and Gly75. A glutathione-binding site is contributed by Ser74. Glutathione is bound at residue Arg81. Glu94 is an FAD binding site. Lys97 carries the post-translational modification N6-acetyllysine. Thr101, Cys102, and Lys110 together coordinate FAD. Cys102 and Cys107 are oxidised to a cystine. Tyr158 provides a ligand contact to glutathione. FAD is bound at residue Ala174. 6 residues coordinate NADP(+): Ala239, Ile242, Glu245, Arg262, Arg268, and Gly334. FAD is bound at residue Asp375. Leu381 contacts NADP(+). Thr383 lines the FAD pocket. Residue Arg391 participates in glutathione binding. Val414 serves as a coordination point for NADP(+). Position 511 (His511) interacts with FAD. The active-site Proton acceptor is the His511.

Belongs to the class-I pyridine nucleotide-disulfide oxidoreductase family. Homodimer; disulfide-linked. Requires FAD as cofactor.

The protein resides in the mitochondrion. The protein localises to the cytoplasm. The catalysed reaction is 2 glutathione + NADP(+) = glutathione disulfide + NADPH + H(+). Functionally, catalyzes the reduction of glutathione disulfide (GSSG) to reduced glutathione (GSH). Constitutes the major mechanism to maintain a high GSH:GSSG ratio in the cytosol. The polypeptide is Glutathione reductase, mitochondrial (GSR) (Callithrix jacchus (White-tufted-ear marmoset)).